A 626-amino-acid polypeptide reads, in one-letter code: Basic helix-loop-helix ARNT-like protein 1 (626 aa).

The segment at 1 to 58 is disordered; it reads MADQRMDISSTISDFMSPGPTDLLSSSLGTSGVDCNRKRKGSATDYQESMDTDKDDPH. Position 17 is a phosphoserine; by GSK3-beta (S17). The span at 17–32 shows a compositional bias: low complexity; sequence SPGPTDLLSSSLGTSG. Residue T21 is modified to Phosphothreonine; by GSK3-beta. Residues 36–41 carry the Nuclear localization signal motif; the sequence is NRKRKG. A bHLH domain is found at 72–125; the sequence is NAREAHSQIEKRRRDKMNSFIDELASLVPTCNAMSRKLDKLTVLRMAVQHMKTL. At S78 the chain carries Phosphoserine. S90 is subject to Phosphoserine; by CK2. The short motif at 142-152 is the Nuclear export signal 1 element; that stretch reads LSDDELKHLIL. The PAS 1 domain maps to 143–215; it reads SDDELKHLIL…EQLSSSDTAP (73 aa). K252 participates in a covalent cross-link: Glycyl lysine isopeptide (Lys-Gly) (interchain with G-Cter in SUMO2 and SUMO3). Residue K259 forms a Glycyl lysine isopeptide (Lys-Gly) (interchain with G-Cter in SUMO); alternate linkage. Residue K259 forms a Glycyl lysine isopeptide (Lys-Gly) (interchain with G-Cter in SUMO2); alternate linkage. In terms of domain architecture, PAS 2 spans 326 to 396; sequence PQPVNGEIRV…ECHRQVLQTR (71 aa). The short motif at 361-369 is the Nuclear export signal 2 element; it reads LAYLPQELL. The PAC domain occupies 401–444; that stretch reads TNCYKFKIKDGSFITLRSRWFSFMNPWTKEVEYIVSTNTVVLAN. Disordered regions lie at residues 459–492 and 511–595; these read SPHS…RAGA and GSSP…SPSN. Residues 508–588 are interaction with CIART; it reads RIRGSSPSSC…IGIDMIDNDQ (81 aa). Positions 511–521 are enriched in low complexity; it reads GSSPSSCGSSP. An N6-acetyllysine modification is found at K538.

In terms of assembly, component of the circadian clock oscillator which includes the CRY1/2 proteins, CLOCK or NPAS2, BMAL1 or BMAL2, CSNK1D and/or CSNK1E, TIMELESS and the PER1/2/3 proteins. Forms a heterodimer with CLOCK. The CLOCK-BMAL1 heterodimer is required for E-box-dependent transactivation, for CLOCK nuclear translocation and degradation, and, for phosphorylation of both CLOCK and BMAL1. Part of a nuclear complex which also includes RACK1 and PRKCA; RACK1 and PRKCA are recruited to the complex in a circadian manner. Interacts with NPAS2. Interacts with EZH2. Interacts with SUMO3. Interacts with SIRT1. Interacts with AHR. Interacts with ID1, ID2 and ID3. Interacts with DDX4. Interacts with OGT. Interacts with EED and SUZ12. Interacts with MTA1. Interacts with CIART. Interacts with HSP90. Interacts with KAT2B and EP300. Interacts with BHLHE40/DEC1 and BHLHE41/DEC2. Interacts with RELB and the interaction is enhanced in the presence of CLOCK. Interacts with PER1, PER2, CRY1 and CRY2 and this interaction requires a translocation to the nucleus. Interaction of the CLOCK-BMAL1 heterodimer with PER or CRY inhibits transcription activation. Interaction of the CLOCK-BMAL1 with CRY1 is independent of DNA but with PER2 is off DNA. The CLOCK-BMAL1 heterodimer interacts with GSK3B. Interacts with KDM5A. Interacts with KMT2A; in a circadian manner. Interacts with UBE3A. Interacts with PRKCG. Interacts with MAGEL2. Interacts with NCOA2. Interacts with THRAP3. The CLOCK-BMAL1 heterodimer interacts with PASD1. Interacts with PASD1. Interacts with USP9X. Interacts with PIWIL2 (via PIWI domain). Interacts with HDAC3. Interacts with HNF4A. Post-translationally, ubiquitinated, leading to its proteasomal degradation. Deubiquitinated by USP9X. In terms of processing, O-glycosylated; contains O-GlcNAc. O-glycosylation by OGT prevents protein degradation by inhibiting ubiquitination. It also stabilizes the CLOCK-BMAL1 heterodimer thereby increasing CLOCK-BMAL1-mediated transcription of genes in the negative loop of the circadian clock such as PER1/2/3 and CRY1/2. Acetylated on Lys-538 by CLOCK during the repression phase of the circadian cycle. Acetylation facilitates recruitment of CRY1 protein and initiates the repression phase of the circadian cycle. Acetylated at Lys-538 by KAT5 during the activation phase of the cycle, leading to recruitment of the positive transcription elongation factor b (P-TEFb) and BRD4, followed by productive elongation of circadian transcripts. Deacetylated by SIRT1, which may result in decreased protein stability. Post-translationally, phosphorylated upon dimerization with CLOCK. Phosphorylation enhances the transcriptional activity, alters the subcellular localization and decreases the stability of the CLOCK-BMAL1 heterodimer by promoting its degradation. Phosphorylation shows circadian variations in the liver with a peak between CT10 to CT14. Phosphorylation at Ser-90 by CK2 is essential for its nuclear localization, its interaction with CLOCK and controls CLOCK nuclear entry. Dephosphorylation at Ser-78 is important for dimerization with CLOCK and transcriptional activity. In terms of processing, sumoylated on Lys-259 upon dimerization with CLOCK. Predominantly conjugated to poly-SUMO2/3 rather than SUMO1 and the level of these conjugates undergo rhythmic variation, peaking at CT9-CT12. Sumoylation localizes it exclusively to the PML body and promotes its ubiquitination in the PML body, ubiquitin-dependent proteasomal degradation and the transcriptional activity of the CLOCK-BMAL1 heterodimer. Undergoes lysosome-mediated degradation in a time-dependent manner in the liver.

The protein resides in the nucleus. Its subcellular location is the cytoplasm. It localises to the PML body. Transcriptional activator which forms a core component of the circadian clock. The circadian clock, an internal time-keeping system, regulates various physiological processes through the generation of approximately 24 hour circadian rhythms in gene expression, which are translated into rhythms in metabolism and behavior. It is derived from the Latin roots 'circa' (about) and 'diem' (day) and acts as an important regulator of a wide array of physiological functions including metabolism, sleep, body temperature, blood pressure, endocrine, immune, cardiovascular, and renal function. Consists of two major components: the central clock, residing in the suprachiasmatic nucleus (SCN) of the brain, and the peripheral clocks that are present in nearly every tissue and organ system. Both the central and peripheral clocks can be reset by environmental cues, also known as Zeitgebers (German for 'timegivers'). The predominant Zeitgeber for the central clock is light, which is sensed by retina and signals directly to the SCN. The central clock entrains the peripheral clocks through neuronal and hormonal signals, body temperature and feeding-related cues, aligning all clocks with the external light/dark cycle. Circadian rhythms allow an organism to achieve temporal homeostasis with its environment at the molecular level by regulating gene expression to create a peak of protein expression once every 24 hours to control when a particular physiological process is most active with respect to the solar day. Transcription and translation of core clock components (CLOCK, NPAS2, BMAL1, BMAL2, PER1, PER2, PER3, CRY1 and CRY2) plays a critical role in rhythm generation, whereas delays imposed by post-translational modifications (PTMs) are important for determining the period (tau) of the rhythms (tau refers to the period of a rhythm and is the length, in time, of one complete cycle). A diurnal rhythm is synchronized with the day/night cycle, while the ultradian and infradian rhythms have a period shorter and longer than 24 hours, respectively. Disruptions in the circadian rhythms contribute to the pathology of cardiovascular diseases, cancer, metabolic syndromes and aging. A transcription/translation feedback loop (TTFL) forms the core of the molecular circadian clock mechanism. Transcription factors, CLOCK or NPAS2 and BMAL1 or BMAL2, form the positive limb of the feedback loop, act in the form of a heterodimer and activate the transcription of core clock genes and clock-controlled genes (involved in key metabolic processes), harboring E-box elements (5'-CACGTG-3') within their promoters. The core clock genes: PER1/2/3 and CRY1/2 which are transcriptional repressors form the negative limb of the feedback loop and interact with the CLOCK|NPAS2-BMAL1|BMAL2 heterodimer inhibiting its activity and thereby negatively regulating their own expression. This heterodimer also activates nuclear receptors NR1D1/2 and RORA/B/G, which form a second feedback loop and which activate and repress BMAL1 transcription, respectively. BMAL1 positively regulates myogenesis and negatively regulates adipogenesis via the transcriptional control of the genes of the canonical Wnt signaling pathway. Plays a role in normal pancreatic beta-cell function; regulates glucose-stimulated insulin secretion via the regulation of antioxidant genes NFE2L2/NRF2 and its targets SESN2, PRDX3, CCLC and CCLM. Negatively regulates the mTORC1 signaling pathway; regulates the expression of MTOR and DEPTOR. Controls diurnal oscillations of Ly6C inflammatory monocytes; rhythmic recruitment of the PRC2 complex imparts diurnal variation to chemokine expression that is necessary to sustain Ly6C monocyte rhythms. Regulates the expression of HSD3B2, STAR, PTGS2, CYP11A1, CYP19A1 and LHCGR in the ovary and also the genes involved in hair growth. Plays an important role in adult hippocampal neurogenesis by regulating the timely entry of neural stem/progenitor cells (NSPCs) into the cell cycle and the number of cell divisions that take place prior to cell-cycle exit. Regulates the circadian expression of CIART and KLF11. The CLOCK-BMAL1 heterodimer regulates the circadian expression of SERPINE1/PAI1, VWF, B3, CCRN4L/NOC, NAMPT, DBP, MYOD1, PPARGC1A, PPARGC1B, SIRT1, GYS2, F7, NGFR, GNRHR, BHLHE40/DEC1, ATF4, MTA1, KLF10 and also genes implicated in glucose and lipid metabolism. Promotes rhythmic chromatin opening, regulating the DNA accessibility of other transcription factors. The NPAS2-BMAL1 heterodimer positively regulates the expression of MAOA, F7 and LDHA and modulates the circadian rhythm of daytime contrast sensitivity by regulating the rhythmic expression of adenylate cyclase type 1 (ADCY1) in the retina. The preferred binding motif for the CLOCK-BMAL1 heterodimer is 5'-CACGTGA-3', which contains a flanking adenine nucleotide at the 3-prime end of the canonical 6-nucleotide E-box sequence. CLOCK specifically binds to the half-site 5'-CAC-3', while BMAL1 binds to the half-site 5'-GTGA-3'. The CLOCK-BMAL1 heterodimer also recognizes the non-canonical E-box motifs 5'-AACGTGA-3' and 5'-CATGTGA-3'. Essential for the rhythmic interaction of CLOCK with ASS1 and plays a critical role in positively regulating CLOCK-mediated acetylation of ASS1. Plays a role in protecting against lethal sepsis by limiting the expression of immune checkpoint protein CD274 in macrophages in a PKM2-dependent manner. Regulates the diurnal rhythms of skeletal muscle metabolism via transcriptional activation of genes promoting triglyceride synthesis (DGAT2) and metabolic efficiency (COQ10B). The polypeptide is Basic helix-loop-helix ARNT-like protein 1 (BMAL1) (Mesocricetus auratus (Golden hamster)).